The chain runs to 413 residues: Serine hydroxymethyltransferase (413 aa).

Residues leucine 120 and 124–126 (GHL) contribute to the (6S)-5,6,7,8-tetrahydrofolate site. Lysine 229 carries the N6-(pyridoxal phosphate)lysine modification. Residue 352 to 354 (SPF) coordinates (6S)-5,6,7,8-tetrahydrofolate.

The protein belongs to the SHMT family. In terms of assembly, homodimer. Pyridoxal 5'-phosphate is required as a cofactor.

It localises to the cytoplasm. The catalysed reaction is (6R)-5,10-methylene-5,6,7,8-tetrahydrofolate + glycine + H2O = (6S)-5,6,7,8-tetrahydrofolate + L-serine. It functions in the pathway one-carbon metabolism; tetrahydrofolate interconversion. It participates in amino-acid biosynthesis; glycine biosynthesis; glycine from L-serine: step 1/1. Catalyzes the reversible interconversion of serine and glycine with tetrahydrofolate (THF) serving as the one-carbon carrier. This reaction serves as the major source of one-carbon groups required for the biosynthesis of purines, thymidylate, methionine, and other important biomolecules. Also exhibits THF-independent aldolase activity toward beta-hydroxyamino acids, producing glycine and aldehydes, via a retro-aldol mechanism. This chain is Serine hydroxymethyltransferase, found in Heliobacterium modesticaldum (strain ATCC 51547 / Ice1).